The following is a 376-amino-acid chain: Phosphoserine aminotransferase (376 aa).

R42 lines the L-glutamate pocket. Pyridoxal 5'-phosphate is bound by residues W104, T163, D188, and Q211. K212 is modified (N6-(pyridoxal phosphate)lysine). 253–254 (NT) lines the pyridoxal 5'-phosphate pocket.

The protein belongs to the class-V pyridoxal-phosphate-dependent aminotransferase family. SerC subfamily. As to quaternary structure, homodimer. The cofactor is pyridoxal 5'-phosphate.

The protein resides in the cytoplasm. It catalyses the reaction O-phospho-L-serine + 2-oxoglutarate = 3-phosphooxypyruvate + L-glutamate. The catalysed reaction is 4-(phosphooxy)-L-threonine + 2-oxoglutarate = (R)-3-hydroxy-2-oxo-4-phosphooxybutanoate + L-glutamate. It participates in amino-acid biosynthesis; L-serine biosynthesis; L-serine from 3-phospho-D-glycerate: step 2/3. The protein operates within cofactor biosynthesis; pyridoxine 5'-phosphate biosynthesis; pyridoxine 5'-phosphate from D-erythrose 4-phosphate: step 3/5. Functionally, catalyzes the reversible conversion of 3-phosphohydroxypyruvate to phosphoserine and of 3-hydroxy-2-oxo-4-phosphonooxybutanoate to phosphohydroxythreonine. The sequence is that of Phosphoserine aminotransferase from Bordetella avium (strain 197N).